The chain runs to 298 residues: Lysozyme-like protein 1 (298 aa).

Positions 1-16 (MLKLAFVTFLFALASA) are cleaved as a signal peptide. The 219-residue stretch at 59-277 (YAYAVDISVP…AAASSKNTDF (219 aa)) folds into the Ch-type lysozyme domain.

It belongs to the glycosyl hydrolase 25 family. In terms of tissue distribution, expressed in intestine, IL2 and IL6 neurons and some neurons in the head ganglia.

It is found in the cytoplasmic vesicle lumen. In terms of biological role, involved in resistance to Gram-negative bacterium S.marcescens and to bacterium Gram-positive S.aureus infection. The chain is Lysozyme-like protein 1 from Caenorhabditis elegans.